A 264-amino-acid polypeptide reads, in one-letter code: Glutamate racemase (264 aa).

Substrate-binding positions include 10-11 (DS) and 42-43 (YG). C73 functions as the Proton donor/acceptor in the catalytic mechanism. Position 74–75 (74–75 (NT)) interacts with substrate. Residue C183 is the Proton donor/acceptor of the active site. 184 to 185 (TH) is a binding site for substrate.

It belongs to the aspartate/glutamate racemases family.

The enzyme catalyses L-glutamate = D-glutamate. It participates in cell wall biogenesis; peptidoglycan biosynthesis. Provides the (R)-glutamate required for cell wall biosynthesis. The protein is Glutamate racemase of Streptococcus mutans serotype c (strain ATCC 700610 / UA159).